Consider the following 132-residue polypeptide: Small ribosomal subunit protein uS8c (132 aa).

Belongs to the universal ribosomal protein uS8 family. In terms of assembly, part of the 30S ribosomal subunit.

It is found in the plastid. The protein resides in the chloroplast. One of the primary rRNA binding proteins, it binds directly to 16S rRNA central domain where it helps coordinate assembly of the platform of the 30S subunit. The polypeptide is Small ribosomal subunit protein uS8c (rps8) (Nymphaea alba (White water-lily)).